Reading from the N-terminus, the 339-residue chain is Ketol-acid reductoisomerase (NADP(+)) (339 aa).

Positions 1–182 (MRVYYDRDAD…GGGRAGIIET (182 aa)) constitute a KARI N-terminal Rossmann domain. Residues 24-27 (YGSQ), R48, S51, T53, and 83-86 (DELQ) contribute to the NADP(+) site. H108 is a catalytic residue. G134 contacts NADP(+). Residues 183–328 (TFKEECETDL…AKLRGMMPWI (146 aa)) enclose the KARI C-terminal knotted domain. Mg(2+) contacts are provided by D191, E195, E227, and E231. S252 provides a ligand contact to substrate.

The protein belongs to the ketol-acid reductoisomerase family. Requires Mg(2+) as cofactor.

The catalysed reaction is (2R)-2,3-dihydroxy-3-methylbutanoate + NADP(+) = (2S)-2-acetolactate + NADPH + H(+). It carries out the reaction (2R,3R)-2,3-dihydroxy-3-methylpentanoate + NADP(+) = (S)-2-ethyl-2-hydroxy-3-oxobutanoate + NADPH + H(+). It participates in amino-acid biosynthesis; L-isoleucine biosynthesis; L-isoleucine from 2-oxobutanoate: step 2/4. Its pathway is amino-acid biosynthesis; L-valine biosynthesis; L-valine from pyruvate: step 2/4. Its function is as follows. Involved in the biosynthesis of branched-chain amino acids (BCAA). Catalyzes an alkyl-migration followed by a ketol-acid reduction of (S)-2-acetolactate (S2AL) to yield (R)-2,3-dihydroxy-isovalerate. In the isomerase reaction, S2AL is rearranged via a Mg-dependent methyl migration to produce 3-hydroxy-3-methyl-2-ketobutyrate (HMKB). In the reductase reaction, this 2-ketoacid undergoes a metal-dependent reduction by NADPH to yield (R)-2,3-dihydroxy-isovalerate. The polypeptide is Ketol-acid reductoisomerase (NADP(+)) (Methylobacterium radiotolerans (strain ATCC 27329 / DSM 1819 / JCM 2831 / NBRC 15690 / NCIMB 10815 / 0-1)).